An 857-amino-acid chain; its full sequence is Mitogen-activated protein kinase kinase kinase dlk-1 (857 aa).

A Protein kinase domain is found at 62 to 304; it reads ISNLEWLGSG…FSHIRQHWEI (243 aa). Residues 68 to 76 and lysine 89 each bind ATP; that span reads LGSGSQGAV. Aspartate 173 acts as the Proton acceptor in catalysis. 4 disordered regions span residues 441–503, 572–625, 733–775, and 818–857; these read EEMS…ISRN, RIAS…PSRN, NAND…MESE, and HSIKTHRRTSSNPQAIIHQRIEEYSSSATEDSDDAGAVRI. The segment covering 467–488 has biased composition (low complexity); sequence SSGAQSSPFSRQSSCRSSAGQQ. Positions 609–623 are enriched in polar residues; that stretch reads APRSSSKLNRSSYPS. Residues 753–762 are compositionally biased toward acidic residues; that stretch reads ADVESSEDEG. Over residues 763–772 the composition is skewed to polar residues; that stretch reads NGNNILNTSM.

This sequence belongs to the protein kinase superfamily. STE Ser/Thr protein kinase family. MAP kinase kinase kinase subfamily. It depends on Mg(2+) as a cofactor. In terms of processing, ubiquitinated by rpm-1. Negatively regulated by ubiquitination by fsn-1 bound rpm-1, followed by degradation.

Its subcellular location is the synapse. The catalysed reaction is L-seryl-[protein] + ATP = O-phospho-L-seryl-[protein] + ADP + H(+). It catalyses the reaction L-threonyl-[protein] + ATP = O-phospho-L-threonyl-[protein] + ADP + H(+). Component of a MAP kinase pathway that functions presynaptically to regulate synaptic architecture and presynaptic differentiation. Phosphorylates and activates mkk-4. The polypeptide is Mitogen-activated protein kinase kinase kinase dlk-1 (Caenorhabditis briggsae).